The sequence spans 471 residues: Putative multidrug resistance protein MdtD (471 aa).

Residues 1–11 (MTDLPDSTRWQ) lie on the Periplasmic side of the membrane. A helical transmembrane segment spans residues 12–32 (LWIVAFGFFMQSLDTTIVNTA). Topologically, residues 33-48 (LPSMAQSLGESPLHMH) are cytoplasmic. A helical membrane pass occupies residues 49 to 69 (MVIVSYVLTVAVMLPASGWLA). Topologically, residues 70–76 (DKVGVRN) are periplasmic. A helical membrane pass occupies residues 77-97 (IFFTAIVLFTLGSLFCALSGT). Over 98 to 101 (LNEL) the chain is Cytoplasmic. The helical transmembrane segment at 102 to 124 (LLARALQGVGGAMMVPVGRLTVM) threads the bilayer. The Periplasmic portion of the chain corresponds to 125 to 137 (KIVPREQYMAAMT). A helical transmembrane segment spans residues 138–158 (FVTLPGQVGPLLGPALGGLLV). The Cytoplasmic portion of the chain corresponds to 159 to 164 (EYASWH). The helical transmembrane segment at 165-185 (WIFLINIPVGIIGAIATLMLM) threads the bilayer. Residues 186-196 (PNYTMQTRRFD) lie on the Periplasmic side of the membrane. A helical transmembrane segment spans residues 197-217 (LSGFLLLAVGMAVLTLALDGS). Residues 218-224 (KGTGLSP) lie on the Cytoplasmic side of the membrane. The helical transmembrane segment at 225-245 (LTIDGLVAVGVVALVLYLLHA) threads the bilayer. Topologically, residues 246-262 (RNNNRALFSLKLFRTRT) are periplasmic. The chain crosses the membrane as a helical span at residues 263 to 283 (FSLGLAGSFAGRIGSGMLPFM). Over 284–285 (TP) the chain is Cytoplasmic. A helical membrane pass occupies residues 286–306 (VFLQIGLGFSPFHAGLMMIPM). Topologically, residues 307 to 341 (VLGSMGMKRIVVQVVNRFGYRRVLVATTLGLSLVT) are periplasmic. Residues 342 to 362 (LLFMTTALLGWYYVLPFVLFL) form a helical membrane-spanning segment. At 363–395 (QGMVNSTRFSSMNTLTLKDLPDNLASSGNSLLS) the chain is on the cytoplasmic side. A helical transmembrane segment spans residues 396-416 (MIMQLSMSIGVTIAGLLLGLF). Topologically, residues 417–430 (GSQHVSIDSGTTQT) are periplasmic. Residues 431-451 (VFMYTWLSMALIIALPAFIFA) traverse the membrane as a helical segment. Topologically, residues 452 to 471 (RVPNDTHQNVAISRRKRSAQ) are cytoplasmic.

The protein belongs to the major facilitator superfamily. TCR/Tet family.

The protein resides in the cell inner membrane. The polypeptide is Putative multidrug resistance protein MdtD (Escherichia coli (strain SE11)).